We begin with the raw amino-acid sequence, 188 residues long: Adenine phosphoribosyltransferase (188 aa).

The protein belongs to the purine/pyrimidine phosphoribosyltransferase family. As to quaternary structure, homodimer.

The protein resides in the cytoplasm. The catalysed reaction is AMP + diphosphate = 5-phospho-alpha-D-ribose 1-diphosphate + adenine. The protein operates within purine metabolism; AMP biosynthesis via salvage pathway; AMP from adenine: step 1/1. Functionally, catalyzes a salvage reaction resulting in the formation of AMP, that is energically less costly than de novo synthesis. The polypeptide is Adenine phosphoribosyltransferase (Burkholderia ambifaria (strain MC40-6)).